Here is a 232-residue protein sequence, read N- to C-terminus: GTP cyclohydrolase 1 (232 aa).

Residues 1 to 24 (MSDNLKSYQDNHIENEDEEIYERS) form a disordered region. Residues Cys-121, His-124, and Cys-192 each coordinate Zn(2+).

It belongs to the GTP cyclohydrolase I family. Toroid-shaped homodecamer, composed of two pentamers of five dimers.

The catalysed reaction is GTP + H2O = 7,8-dihydroneopterin 3'-triphosphate + formate + H(+). It functions in the pathway cofactor biosynthesis; 7,8-dihydroneopterin triphosphate biosynthesis; 7,8-dihydroneopterin triphosphate from GTP: step 1/1. Functionally, first enzyme in the biosynthesis of tetrahydrobiopterin (BH4). Catalyzes the conversion of GTP into dihydroneopterin triphosphate (7,8-dihydroneopterin 3'-triphosphate), which is subsequently catalyzed by 6-pyruvoyltetrahydropterin synthase (ptsA) and sepiapterin reductase (sprA). This Dictyostelium discoideum (Social amoeba) protein is GTP cyclohydrolase 1 (gchA).